Consider the following 175-residue polypeptide: Adenine phosphoribosyltransferase (175 aa).

This sequence belongs to the purine/pyrimidine phosphoribosyltransferase family. As to quaternary structure, homodimer.

The protein resides in the cytoplasm. It carries out the reaction AMP + diphosphate = 5-phospho-alpha-D-ribose 1-diphosphate + adenine. The protein operates within purine metabolism; AMP biosynthesis via salvage pathway; AMP from adenine: step 1/1. Functionally, catalyzes a salvage reaction resulting in the formation of AMP, that is energically less costly than de novo synthesis. The protein is Adenine phosphoribosyltransferase of Lacticaseibacillus paracasei (strain ATCC 334 / BCRC 17002 / CCUG 31169 / CIP 107868 / KCTC 3260 / NRRL B-441) (Lactobacillus paracasei).